The primary structure comprises 129 residues: uncharacterized protein (129 aa).

Transmembrane regions (helical) follow at residues 35–55 (IVDG…WKIP) and 98–118 (ILLL…IILL).

The protein resides in the membrane. This is an uncharacterized protein from Saccharomyces cerevisiae (strain ATCC 204508 / S288c) (Baker's yeast).